A 406-amino-acid chain; its full sequence is GTPase Obg (406 aa).

Residues 1-159 enclose the Obg domain; sequence MRFVDEAVIT…REIRLELKVL (159 aa). A disordered region spans residues 120–143; it reads GGEGGLGNTHFKSSTNRAPRKCTT. The 174-residue stretch at 160–333 folds into the OBG-type G domain; the sequence is ADVGLLGMPN…VVYYLMDQIE (174 aa). GTP is bound by residues 166 to 173, 191 to 195, 213 to 216, 283 to 286, and 314 to 316; these read GMPNAGKS, FTTMV, DIPG, NKLD, and SGL. Residues S173 and T193 each contribute to the Mg(2+) site. The segment at 381 to 406 is disordered; the sequence is ESMMDDDDDFDDDEDDGDVESIYVRD. Positions 383–399 are enriched in acidic residues; that stretch reads MMDDDDDFDDDEDDGDV.

This sequence belongs to the TRAFAC class OBG-HflX-like GTPase superfamily. OBG GTPase family. Monomer. It depends on Mg(2+) as a cofactor.

Its subcellular location is the cytoplasm. Functionally, an essential GTPase which binds GTP, GDP and possibly (p)ppGpp with moderate affinity, with high nucleotide exchange rates and a fairly low GTP hydrolysis rate. Plays a role in control of the cell cycle, stress response, ribosome biogenesis and in those bacteria that undergo differentiation, in morphogenesis control. The sequence is that of GTPase Obg from Acinetobacter baumannii (strain ACICU).